An 81-amino-acid chain; its full sequence is Thrombin-like enzyme collinein-3 (81 aa).

Asp4 is a catalytic residue. Cys51 and Cys68 form a disulfide bridge.

Monomer. Expressed by the vanom gland.

Its subcellular location is the secreted. Its function is as follows. Thrombin-like snake venom serine protease. The polypeptide is Thrombin-like enzyme collinein-3 (Crotalus durissus collilineatus (Brazilian rattlesnake)).